The primary structure comprises 658 residues: DNA mismatch repair protein MutL (658 aa).

Basic and acidic residues predominate over residues Arg-114–Lys-130. Disordered regions lie at residues Arg-114–Ala-138 and Pro-353–Ser-405. Polar residues predominate over residues Glu-361 to Thr-372.

The protein belongs to the DNA mismatch repair MutL/HexB family.

This protein is involved in the repair of mismatches in DNA. It is required for dam-dependent methyl-directed DNA mismatch repair. May act as a 'molecular matchmaker', a protein that promotes the formation of a stable complex between two or more DNA-binding proteins in an ATP-dependent manner without itself being part of a final effector complex. The protein is DNA mismatch repair protein MutL of Neisseria gonorrhoeae (strain NCCP11945).